A 230-amino-acid polypeptide reads, in one-letter code: Ribose-5-phosphate isomerase A (230 aa).

Substrate is bound by residues 29–32 (TGST), 85–88 (DGAD), and 98–101 (KGGG). The active-site Proton acceptor is the E107. K125 lines the substrate pocket.

This sequence belongs to the ribose 5-phosphate isomerase family. In terms of assembly, homodimer.

The catalysed reaction is aldehydo-D-ribose 5-phosphate = D-ribulose 5-phosphate. It functions in the pathway carbohydrate degradation; pentose phosphate pathway; D-ribose 5-phosphate from D-ribulose 5-phosphate (non-oxidative stage): step 1/1. Catalyzes the reversible conversion of ribose-5-phosphate to ribulose 5-phosphate. In Staphylococcus haemolyticus (strain JCSC1435), this protein is Ribose-5-phosphate isomerase A.